Consider the following 532-residue polypeptide: Bifunctional purine biosynthesis protein PurH (532 aa).

The region spanning 1–147 (MADRPIRQAL…KNHKDVAIVV (147 aa)) is the MGS-like domain.

It belongs to the PurH family.

It carries out the reaction (6R)-10-formyltetrahydrofolate + 5-amino-1-(5-phospho-beta-D-ribosyl)imidazole-4-carboxamide = 5-formamido-1-(5-phospho-D-ribosyl)imidazole-4-carboxamide + (6S)-5,6,7,8-tetrahydrofolate. The catalysed reaction is IMP + H2O = 5-formamido-1-(5-phospho-D-ribosyl)imidazole-4-carboxamide. It participates in purine metabolism; IMP biosynthesis via de novo pathway; 5-formamido-1-(5-phospho-D-ribosyl)imidazole-4-carboxamide from 5-amino-1-(5-phospho-D-ribosyl)imidazole-4-carboxamide (10-formyl THF route): step 1/1. The protein operates within purine metabolism; IMP biosynthesis via de novo pathway; IMP from 5-formamido-1-(5-phospho-D-ribosyl)imidazole-4-carboxamide: step 1/1. The polypeptide is Bifunctional purine biosynthesis protein PurH (Haemophilus influenzae (strain ATCC 51907 / DSM 11121 / KW20 / Rd)).